A 138-amino-acid chain; its full sequence is Large ribosomal subunit protein bL17 (138 aa).

It belongs to the bacterial ribosomal protein bL17 family. In terms of assembly, part of the 50S ribosomal subunit. Contacts protein L32.

The sequence is that of Large ribosomal subunit protein bL17 from Methylorubrum extorquens (strain CM4 / NCIMB 13688) (Methylobacterium extorquens).